A 99-amino-acid polypeptide reads, in one-letter code: Ferredoxin, heterocyst (99 aa).

A 2Fe-2S ferredoxin-type domain is found at 4 to 96 (YQVRLINKKQ…NCTIKTHQEP (93 aa)). [2Fe-2S] cluster-binding residues include C42, C47, C50, and C80.

It belongs to the 2Fe2S plant-type ferredoxin family. The cofactor is [2Fe-2S] cluster.

Functionally, ferredoxins are iron-sulfur proteins that transfer electrons in a wide variety of metabolic reactions. Donates electrons to the nitrogenase. This Nostoc sp. (strain PCC 7120 / SAG 25.82 / UTEX 2576) protein is Ferredoxin, heterocyst (fdxH).